A 213-amino-acid chain; its full sequence is Holliday junction resolvase RecU (213 aa).

The Mg(2+) site is built by Thr-98, Asp-100, Glu-113, and Gln-132.

Belongs to the RecU family. It depends on Mg(2+) as a cofactor.

The protein resides in the cytoplasm. The enzyme catalyses Endonucleolytic cleavage at a junction such as a reciprocal single-stranded crossover between two homologous DNA duplexes (Holliday junction).. In terms of biological role, endonuclease that resolves Holliday junction intermediates in genetic recombination. Cleaves mobile four-strand junctions by introducing symmetrical nicks in paired strands. Promotes annealing of linear ssDNA with homologous dsDNA. Required for DNA repair, homologous recombination and chromosome segregation. This Ligilactobacillus salivarius (strain UCC118) (Lactobacillus salivarius) protein is Holliday junction resolvase RecU.